A 204-amino-acid chain; its full sequence is NAD(P)H dehydrogenase (quinone) FQR1 (204 aa).

The Flavodoxin-like domain occupies 5 to 192 (VYIVYYSMYG…QQAFHQGQYI (188 aa)). Residues 11 to 15 (SMYGH), 112 to 165 (IFYS…SPYG), and His136 each bind FMN. Residue Tyr13 coordinates NAD(+).

Belongs to the WrbA family. Requires FMN as cofactor.

Its subcellular location is the cell membrane. It carries out the reaction a quinone + NADH + H(+) = a quinol + NAD(+). The catalysed reaction is a quinone + NADPH + H(+) = a quinol + NADP(+). Functionally, catalyzes the transfer of electrons from NADH and NADPH to several quinones in vitro. May act as detoxification enzyme, and protect against auxin-induced oxidative stress. In Arabidopsis thaliana (Mouse-ear cress), this protein is NAD(P)H dehydrogenase (quinone) FQR1.